Reading from the N-terminus, the 201-residue chain is MGYMGCWCSNLGRKYSGTVSPQRSVQPEALSYEMVYSWQQSFDTLMSFKSGQKCFAEFLKSEYSDENILFWQACEELKREKNSEKMEEKARIIYEDFISILSPKEVSLDSKVREIVNTNMSRPTQNTFEDAQHQIYQLMARDSYPRFLTSIFYRETLASFGITEMDIGGDEEKEREQRAERARLNVPATAAEGSSKDISMV.

The RGS domain occupies 37–156 (SWQQSFDTLM…FLTSIFYRET (120 aa)). Positions 168 to 201 (GGDEEKEREQRAERARLNVPATAAEGSSKDISMV) are disordered. Over residues 170 to 183 (DEEKEREQRAERAR) the composition is skewed to basic and acidic residues.

In terms of tissue distribution, expressed in most or all neurons.

Functionally, inhibits G protein signaling in nervous system, interacting preferentially with the G(O) subfamily member goa-1. In vitro, protein acts as a GTPase activator of goa-1. Rgs-1 and rgs-2 redundantly adjust signaling when worms are fed to allow rapid induction of egg-laying behavior. This Caenorhabditis elegans protein is Regulator of G-protein signaling rgs-1 (rgs-1).